The following is a 589-amino-acid chain: MCGIIGIVSLRESKKLAEMTVSALKRLEYRGYDSVGVASISSNGLEIRKAKGKVEEVVLQKKIEEMEGYVFLGHTRWATHGPPTDYNAHPHTDCNGNIAVVHNGTIKNYKELREELESLGHKFKSETDTEVIPHLIEEFMKRGMDPFQAFKSAIKSLEGSYAVLAVINGERRIFFAKKDNPLIIGLGEGQNFIASDIPAFLPYTKRILVIRDDELGFITPETVYLEDKDGNVINIKERIRSVDWDIETASKEGYPHFMIKEIHESPRAVKETIDSLMSDIDLVEKVIEEIKNAERVIVIGAGTSYHAGLYFSIELNRLGINSLPVIASEYYNVRSKKGDLVFAISQSGETIDVLQGIRMMRNSGAKIISLTNVIESAIARESDYKIYMRAGPEIGVAATKTFTTQLASILFILSVLKKENLKKMEKAPDIVRDTISQVEGLTKKIGEELAKKSNIYYLGRGLSLPLAMEGALKIKEIAYVHAEAYPAGESKHGPISLVEKGFPVVIINDGELTELLQNNLMEMKARGARIYAVSVNKKMKDADVEIELQSEIPVLSIAPVIQLIAYYAAVTKGYDPDKPRNLAKTVTVE.

The Nucleophile; for GATase activity role is filled by Cys-2. A Glutamine amidotransferase type-2 domain is found at 2-221 (CGIIGIVSLR…DDELGFITPE (220 aa)). 2 SIS domains span residues 286-426 (VIEE…KMEK) and 445-579 (IGEE…PDKP). Catalysis depends on Lys-584, which acts as the For Fru-6P isomerization activity.

Homodimer.

The protein localises to the cytoplasm. The enzyme catalyses D-fructose 6-phosphate + L-glutamine = D-glucosamine 6-phosphate + L-glutamate. Functionally, catalyzes the first step in hexosamine metabolism, converting fructose-6P into glucosamine-6P using glutamine as a nitrogen source. The sequence is that of Glutamine--fructose-6-phosphate aminotransferase [isomerizing] from Sulfurisphaera tokodaii (strain DSM 16993 / JCM 10545 / NBRC 100140 / 7) (Sulfolobus tokodaii).